The following is a 1034-amino-acid chain: Potassium-transporting ATPase alpha chain 1 (1034 aa).

Residues 2-97 are Cytoplasmic-facing; that stretch reads GKAENYELYQ…NALRPPRGTP (96 aa). A phosphotyrosine mark is found at Tyr-7 and Tyr-10. The disordered stretch occupies residues 13-40; that stretch reads ELGPGPSGDMAAKMSKKKAGRGGGKRKE. Over residues 26–39 the composition is skewed to basic residues; sequence MSKKKAGRGGGKRK. Residue Ser-27 is modified to Phosphoserine; by PKA and PKC. Residues 98–118 traverse the membrane as a helical segment; that stretch reads EYVKFARQLAGGLQCLMWVAA. Topologically, residues 119–141 are lumenal; that stretch reads AICLIAFAIQASEGDLTTDDNLY. The chain crosses the membrane as a helical span at residues 142 to 162; the sequence is LALALIAVVVVTGCFGYYQEF. At 163–298 the chain is on the cytoplasmic side; the sequence is KSTNIIASFK…NEKTPIAIEI (136 aa). The tract at residues 222 to 244 is disordered; that stretch reads KVDNSSLTGESEPQTRSPECTHE. Over residues 225–239 the composition is skewed to polar residues; sequence NSSLTGESEPQTRSP. A helical membrane pass occupies residues 299-318; it reads EHFVDIIAGLAILFGATFFI. Topologically, residues 319–330 are lumenal; it reads VAMCIGYTFLRA. Residues 331–348 form a helical membrane-spanning segment; it reads MVFFMAIVVAYVPEGLLA. K(+)-binding residues include Val-339, Ala-340, Val-342, and Glu-344. Over 349–782 the chain is Cytoplasmic; the sequence is TVTVCLSLTA…EQGRLIFDNL (434 aa). Asp-386 (4-aspartylphosphate intermediate) is an active-site residue. Mg(2+) is bound by residues Asp-386 and Thr-388. Residues Ser-462 and Ser-600 each carry the phosphoserine modification. 2 residues coordinate Mg(2+): Asp-727 and Asp-731. A helical transmembrane segment spans residues 783-802; the sequence is KKSIAYTLTKNIPELTPYLI. Glu-796 is a binding site for K(+). Over 803–812 the chain is Lumenal; the sequence is YITVSVPLPL. Residues 813–833 traverse the membrane as a helical segment; sequence GCITILFIELCTDIFPSVSLA. A K(+)-binding site is contributed by Glu-821. Residues 834–853 lie on the Cytoplasmic side of the membrane; it reads YEKAESDIMHLRPRNPKRDR. Ser-839 bears the Phosphoserine mark. Residues 854–876 form a helical membrane-spanning segment; it reads LVNEPLAAYSYFQIGAIQSFAGF. At 877–928 the chain is on the lumenal side; that stretch reads TDYFTAMAQEGWFPLLCVGLRPQWENHHLQDLQDSYGQEWTFGQRLYQQYTC. The helical transmembrane segment at 929-948 threads the bilayer; it reads YTVFFISIEMCQIADVLIRK. The Cytoplasmic segment spans residues 949–962; it reads TRRLSAFQQGFFRN. Ser-953 carries the post-translational modification Phosphoserine; by PKA. The helical transmembrane segment at 963-981 threads the bilayer; sequence RILVIAIVFQVCIGCFLCY. Residues 982–996 are Lumenal-facing; that stretch reads CPGMPNIFNFMPIRF. Residues 997–1017 traverse the membrane as a helical segment; the sequence is QWWLVPMPFGLLIFVYDEIRK. The Cytoplasmic portion of the chain corresponds to 1018-1034; sequence LGVRCCPGSWWDQELYY.

It belongs to the cation transport ATPase (P-type) (TC 3.A.3) family. Type IIC subfamily. In terms of assembly, the gastric H(+)/K(+) ATPase pump is composed of the catalytic alpha subunit ATP4A and the regulatory beta subunit ATP4B. Interacts (via the P-domain) with ATP4B (via N-terminus); this interaction stabilizes the lumenal-open E2 conformation state and prevents the reverse reaction of the transport cycle.

It is found in the apical cell membrane. The protein resides in the cell membrane. The catalysed reaction is K(+)(out) + ATP + H2O + H(+)(in) = K(+)(in) + ADP + phosphate + 2 H(+)(out). With respect to regulation, down-regulated by K(+)-competitive acid blockers (P-CABs) such as vonoprazan. Functionally, the catalytic subunit of the gastric H(+)/K(+) ATPase pump which transports H(+) ions in exchange for K(+) ions across the apical membrane of parietal cells. Uses ATP as an energy source to pump H(+) ions to the gastric lumen while transporting K(+) ion from the lumen into the cell. Remarkably generates a million-fold proton gradient across the gastric parietal cell membrane, acidifying the gastric juice down to pH 1. Within a transport cycle, the transfer of a H(+) ion across the membrane is coupled to ATP hydrolysis and is associated with a transient phosphorylation that shifts the pump conformation from inward-facing (E1) to outward-facing state (E2). The release of the H(+) ion in the stomach lumen is followed by binding of K(+) ion converting the pump conformation back to the E1 state. This is Potassium-transporting ATPase alpha chain 1 (ATP4A) from Sus scrofa (Pig).